The primary structure comprises 131 residues: MKEDGMAKITTDELIESFKEMTLIELSEFVSKFEEVFKVTAAAPVAAAAAPVEPAAEAAPEKTTFDVILEAAGDKKIQVIKEVRTITGLGLGEAKALVDGVPSKVLEGANKDAADAAKAQLEAAGAQVSVK.

This sequence belongs to the bacterial ribosomal protein bL12 family. Homodimer. Part of the ribosomal stalk of the 50S ribosomal subunit. Forms a multimeric L10(L12)X complex, where L10 forms an elongated spine to which 2 to 4 L12 dimers bind in a sequential fashion. Binds GTP-bound translation factors.

In terms of biological role, forms part of the ribosomal stalk which helps the ribosome interact with GTP-bound translation factors. Is thus essential for accurate translation. This chain is Large ribosomal subunit protein bL12, found in Tropheryma whipplei (strain Twist) (Whipple's bacillus).